The primary structure comprises 130 residues: Small ribosomal subunit protein uS8 (130 aa).

It belongs to the universal ribosomal protein uS8 family. Part of the 30S ribosomal subunit.

Functionally, one of the primary rRNA binding proteins, it binds directly to 16S rRNA central domain where it helps coordinate assembly of the platform of the 30S subunit. The sequence is that of Small ribosomal subunit protein uS8 from Cenarchaeum symbiosum (strain A).